Here is a 359-residue protein sequence, read N- to C-terminus: Oxopyrrolidines biosynthesis cluster protein G (359 aa).

A disordered region spans residues 1–32; that stretch reads MDHLRDSLLSSLPRDSPSIGAMDYARRDREST. The span at 7-18 shows a compositional bias: low complexity; that stretch reads SLLSSLPRDSPS.

In terms of biological role, part of the gene cluster that mediates the biosynthesis of oxopyrrolidines, polyketide-amino acid hybrid compounds with feature structures of tetramic acid. Does not seem to play a role in oxopyrrolidines A and B biosynthesis. This Penicillium oxalicum (strain 114-2 / CGMCC 5302) (Penicillium decumbens) protein is Oxopyrrolidines biosynthesis cluster protein G.